Consider the following 101-residue polypeptide: Small ribosomal subunit protein uS14 (101 aa).

Belongs to the universal ribosomal protein uS14 family. Part of the 30S ribosomal subunit. Contacts proteins S3 and S10.

Functionally, binds 16S rRNA, required for the assembly of 30S particles and may also be responsible for determining the conformation of the 16S rRNA at the A site. The sequence is that of Small ribosomal subunit protein uS14 from Escherichia coli O8 (strain IAI1).